A 388-amino-acid polypeptide reads, in one-letter code: Succinate--CoA ligase [ADP-forming] subunit beta (388 aa).

An ATP-grasp domain is found at 9–245 (KELLASYGLP…KSQENERELK (237 aa)). ATP-binding positions include Lys46, 53–55 (GRG), Glu100, Tyr103, and Glu108. 2 residues coordinate Mg(2+): Asn200 and Asp214. Residues Asn265 and 322–324 (GIV) each bind substrate.

It belongs to the succinate/malate CoA ligase beta subunit family. As to quaternary structure, heterotetramer of two alpha and two beta subunits. Requires Mg(2+) as cofactor.

The enzyme catalyses succinate + ATP + CoA = succinyl-CoA + ADP + phosphate. It carries out the reaction GTP + succinate + CoA = succinyl-CoA + GDP + phosphate. It functions in the pathway carbohydrate metabolism; tricarboxylic acid cycle; succinate from succinyl-CoA (ligase route): step 1/1. Succinyl-CoA synthetase functions in the citric acid cycle (TCA), coupling the hydrolysis of succinyl-CoA to the synthesis of either ATP or GTP and thus represents the only step of substrate-level phosphorylation in the TCA. The beta subunit provides nucleotide specificity of the enzyme and binds the substrate succinate, while the binding sites for coenzyme A and phosphate are found in the alpha subunit. In Neisseria meningitidis serogroup B (strain ATCC BAA-335 / MC58), this protein is Succinate--CoA ligase [ADP-forming] subunit beta.